The following is a 600-amino-acid chain: Proline--tRNA ligase (600 aa).

The protein belongs to the class-II aminoacyl-tRNA synthetase family. ProS type 1 subfamily. Homodimer.

It localises to the cytoplasm. It catalyses the reaction tRNA(Pro) + L-proline + ATP = L-prolyl-tRNA(Pro) + AMP + diphosphate. In terms of biological role, catalyzes the attachment of proline to tRNA(Pro) in a two-step reaction: proline is first activated by ATP to form Pro-AMP and then transferred to the acceptor end of tRNA(Pro). As ProRS can inadvertently accommodate and process non-cognate amino acids such as alanine and cysteine, to avoid such errors it has two additional distinct editing activities against alanine. One activity is designated as 'pretransfer' editing and involves the tRNA(Pro)-independent hydrolysis of activated Ala-AMP. The other activity is designated 'posttransfer' editing and involves deacylation of mischarged Ala-tRNA(Pro). The misacylated Cys-tRNA(Pro) is not edited by ProRS. This chain is Proline--tRNA ligase, found in Prochlorococcus marinus (strain MIT 9312).